Consider the following 297-residue polypeptide: Phosphatidylserine decarboxylase proenzyme (297 aa).

Active-site charge relay system; for autoendoproteolytic cleavage activity residues include Asp-112, His-168, and Ser-255. The active-site Schiff-base intermediate with substrate; via pyruvic acid; for decarboxylase activity is Ser-255. Ser-255 carries the post-translational modification Pyruvic acid (Ser); by autocatalysis.

Belongs to the phosphatidylserine decarboxylase family. PSD-B subfamily. Prokaryotic type II sub-subfamily. As to quaternary structure, heterodimer of a large membrane-associated beta subunit and a small pyruvoyl-containing alpha subunit. The cofactor is pyruvate. Is synthesized initially as an inactive proenzyme. Formation of the active enzyme involves a self-maturation process in which the active site pyruvoyl group is generated from an internal serine residue via an autocatalytic post-translational modification. Two non-identical subunits are generated from the proenzyme in this reaction, and the pyruvate is formed at the N-terminus of the alpha chain, which is derived from the carboxyl end of the proenzyme. The autoendoproteolytic cleavage occurs by a canonical serine protease mechanism, in which the side chain hydroxyl group of the serine supplies its oxygen atom to form the C-terminus of the beta chain, while the remainder of the serine residue undergoes an oxidative deamination to produce ammonia and the pyruvoyl prosthetic group on the alpha chain. During this reaction, the Ser that is part of the protease active site of the proenzyme becomes the pyruvoyl prosthetic group, which constitutes an essential element of the active site of the mature decarboxylase.

It is found in the cell membrane. It catalyses the reaction a 1,2-diacyl-sn-glycero-3-phospho-L-serine + H(+) = a 1,2-diacyl-sn-glycero-3-phosphoethanolamine + CO2. It functions in the pathway phospholipid metabolism; phosphatidylethanolamine biosynthesis; phosphatidylethanolamine from CDP-diacylglycerol: step 2/2. Its function is as follows. Catalyzes the formation of phosphatidylethanolamine (PtdEtn) from phosphatidylserine (PtdSer). In Clostridium tetani (strain Massachusetts / E88), this protein is Phosphatidylserine decarboxylase proenzyme.